Reading from the N-terminus, the 126-residue chain is Methylglyoxal synthase (126 aa).

The 126-residue stretch at 1–126 folds into the MGS-like domain; sequence MADRKCLALI…AEQLIDFRRN (126 aa). Residues H12, K16, 38–41, and 59–60 each bind substrate; these read TGTT and SG. D65 serves as the catalytic Proton donor/acceptor. H92 serves as a coordination point for substrate.

This sequence belongs to the methylglyoxal synthase family.

It carries out the reaction dihydroxyacetone phosphate = methylglyoxal + phosphate. Functionally, catalyzes the formation of methylglyoxal from dihydroxyacetone phosphate. The polypeptide is Methylglyoxal synthase (Rhizobium meliloti (strain 1021) (Ensifer meliloti)).